An 854-amino-acid polypeptide reads, in one-letter code: Protein mono-ADP-ribosyltransferase PARP8 (854 aa).

Disordered regions lie at residues 113-138 (NGEE…EFYY) and 291-310 (SYPP…EQDG). Residues 123–135 (VEEDSEGDNDSEE) are compositionally biased toward acidic residues. C332, C367, C376, and C395 each carry ADP-ribosylcysteine. The PARP catalytic domain maps to 617–844 (EMTQAPYLEI…QEGGIHKEIL (228 aa)). Residues 750 to 777 (QKVSAKDEPASSSKSSNTSQSQKKGQQS) form a disordered region. A compositionally biased stretch (low complexity) spans 760–777 (SSSKSSNTSQSQKKGQQS).

This sequence belongs to the ARTD/PARP family. In terms of processing, auto-mono-ADP-ribosylated.

It carries out the reaction L-cysteinyl-[protein] + NAD(+) = S-(ADP-D-ribosyl)-L-cysteinyl-[protein] + nicotinamide + H(+). Functionally, mono-ADP-ribosyltransferase that mediates mono-ADP-ribosylation of target proteins. The polypeptide is Protein mono-ADP-ribosyltransferase PARP8 (Homo sapiens (Human)).